The primary structure comprises 83 residues: Short neurotoxin NCA-02/NCA-05/UER-05 (83 aa).

The N-terminal stretch at 1–21 (MKTLLLTLVVVTMVCLDLGYT) is a signal peptide. 4 disulfide bridges follow: C24/C45, C38/C62, C64/C75, and C76/C81.

Belongs to the three-finger toxin family. Short-chain subfamily. Type I alpha-neurotoxin sub-subfamily. Expressed by the venom gland.

It is found in the secreted. Functionally, binds to muscle nicotinic acetylcholine receptor (nAChR) and inhibit acetylcholine from binding to the receptor, thereby impairing neuromuscular transmission. The chain is Short neurotoxin NCA-02/NCA-05/UER-05 from Laticauda colubrina (Yellow-lipped sea krait).